The sequence spans 76 residues: U14-hexatoxin-Hi1a (76 aa).

The first 18 residues, 1–18, serve as a signal peptide directing secretion; sequence MMQLAVLICLSLVVNTFA. 3 disulfide bridges follow: Cys21–Cys34, Cys27–Cys39, and Cys33–Cys61.

As to expression, expressed by the venom gland.

Its subcellular location is the secreted. In terms of biological role, probable ion channel inhibitor. The chain is U14-hexatoxin-Hi1a from Hadronyche infensa (Fraser island funnel-web spider).